The chain runs to 399 residues: Elongation factor Tu (399 aa).

One can recognise a tr-type G domain in the interval 10-204 (KDHVNIGTIG…AVDDYIDTPE (195 aa)). The G1 stretch occupies residues 19–26 (GHVDHGKT). Position 19-26 (19-26 (GHVDHGKT)) interacts with GTP. Thr-26 is a Mg(2+) binding site. The tract at residues 60–64 (GITIN) is G2. Positions 81–84 (DCPG) are G3. GTP-binding positions include 81–85 (DCPGH) and 136–139 (NKKD). The segment at 136 to 139 (NKKD) is G4. A G5 region spans residues 174–176 (SAL).

The protein belongs to the TRAFAC class translation factor GTPase superfamily. Classic translation factor GTPase family. EF-Tu/EF-1A subfamily. In terms of assembly, monomer.

Its subcellular location is the cytoplasm. It carries out the reaction GTP + H2O = GDP + phosphate + H(+). GTP hydrolase that promotes the GTP-dependent binding of aminoacyl-tRNA to the A-site of ribosomes during protein biosynthesis. The protein is Elongation factor Tu of Synechocystis sp. (strain ATCC 27184 / PCC 6803 / Kazusa).